Reading from the N-terminus, the 51-residue chain is Sec-independent protein translocase protein TatA (51 aa).

The helical transmembrane segment at 1–21 threads the bilayer; that stretch reads MGMSFSHLLIILLIIFVLFGA.

The protein belongs to the TatA/E family. As to quaternary structure, the Tat system comprises two distinct complexes: a TatABC complex, containing multiple copies of TatA, TatB and TatC subunits, and a separate TatA complex, containing only TatA subunits. Substrates initially bind to the TatABC complex, which probably triggers association of the separate TatA complex to form the active translocon.

The protein resides in the cell inner membrane. Its function is as follows. Part of the twin-arginine translocation (Tat) system that transports large folded proteins containing a characteristic twin-arginine motif in their signal peptide across membranes. TatA could form the protein-conducting channel of the Tat system. The polypeptide is Sec-independent protein translocase protein TatA (Rickettsia bellii (strain RML369-C)).